The chain runs to 645 residues: Cell pattern formation-associated protein stuA (645 aa).

A disordered region spans residues 1-52 (MNQMQPYADVHQPHMSTAAHAPASGPPAGLSHYSYPHQPSMMQPQQQQHQYG). Residues 18 to 52 (AAHAPASGPPAGLSHYSYPHQPSMMQPQQQQHQYG) are compositionally biased toward low complexity. Residues 124–230 (RVTATLWEDE…HDIGALLYHP (107 aa)) enclose the HTH APSES-type domain. The segment at residues 158 to 179 (GTKLLNVAGMTRGRRDGILKSE) is a DNA-binding region (H-T-H motif). Residues 246-645 (VDRNRRPDSM…HTLAAQRARR (400 aa)) form a disordered region. Polar residues-rich tracts occupy residues 254–271 (SMQT…SQAP) and 279–288 (MTNSVGSAMS). Low complexity predominate over residues 317–330 (SASSMMGMGNQGSS). Residues 336–365 (ANVQQHPQGNQPLSIDTGLSNARSVPTTPA) are compositionally biased toward polar residues. Positions 469-481 (PYNGNRGPYGYNP) are enriched in low complexity. Composition is skewed to polar residues over residues 502-542 (SPHQ…NLYN) and 569-584 (YASQ…NSSG). Positions 585-613 (KRGRDEEDAETYRPDSVQGDDMGGLKRRK) are nuclear localization domain. Residues 586 to 597 (RGRDEEDAETYR) show a composition bias toward basic and acidic residues.

It belongs to the EFG1/PHD1/stuA family.

It is found in the nucleus. Its function is as follows. Transcription factor that regulates asexual reproduction. Binds the StuA-response elements (StRE) with the consensus sequence 5'-(A/T)CGCG(T/A)N(A/C)-3' at the promoters of target genes. Regulates the expression of several effector genes (AvrLm1, AvrLm6 and AvrLm4-7) during infection stage. This Leptosphaeria maculans (strain JN3 / isolate v23.1.3 / race Av1-4-5-6-7-8) (Blackleg fungus) protein is Cell pattern formation-associated protein stuA.